The sequence spans 176 residues: Ribonuclease mitogillin (176 aa).

The signal sequence occupies residues 1–27 (MVAIKNLFLLAATAVSVLAAPSPLDAR). Cystine bridges form between C32–C174 and C102–C158. H76 is a catalytic residue. The active-site Proton acceptor is E122. H163 functions as the Proton donor in the catalytic mechanism.

This sequence belongs to the ribonuclease U2 family.

It localises to the secreted. This purine-specific ribonuclease cleaves 28S RNA in eukaryotic ribosomes, inhibits protein synthesis, and shows antitumor activity. The polypeptide is Ribonuclease mitogillin (mitF) (Aspergillus fumigatus (strain ATCC MYA-4609 / CBS 101355 / FGSC A1100 / Af293) (Neosartorya fumigata)).